We begin with the raw amino-acid sequence, 299 residues long: MKLKDLIGKASIHKNKTIAVAHAEDEEVIRAVKLAAEHLSARFLLTGDSKKLNELTSSMQGHQVEIVHANTPEESAKLAVRAVHHKTADVLMKGNVPTSVLLKAVLNRQEGLRSASVLSHVAVFDIPDFDRLMFVTDSAMNIAPSLEELRQILQNAVHVAHAVGNNMPKAAALAAVETVNPKMEATVNAAALAQMYKRGQIKGCIVDGPLALDNAVSQIAAAQKKISGDVAGNADILLVPTIEAGNILYKSLIYFAKASVAAVITGAKAPIALTSRADSAENKLYSIALAICASEEYTH.

The protein belongs to the phosphate acetyltransferase and butyryltransferase family.

The catalysed reaction is butanoyl-CoA + phosphate = butanoyl phosphate + CoA. Its function is as follows. Catalyzes the conversion of butyryl-CoA through butyryl phosphate to butyrate. This chain is Probable phosphate butyryltransferase (yqiS), found in Bacillus subtilis (strain 168).